A 102-amino-acid polypeptide reads, in one-letter code: Small ribosomal subunit protein uS10 (102 aa).

Belongs to the universal ribosomal protein uS10 family. Part of the 30S ribosomal subunit.

Involved in the binding of tRNA to the ribosomes. The sequence is that of Small ribosomal subunit protein uS10 from Hyperthermus butylicus (strain DSM 5456 / JCM 9403 / PLM1-5).